A 585-amino-acid chain; its full sequence is Protein NRT1/ PTR FAMILY 8.3 (585 aa).

At glycine 2 the chain carries N-acetylglycine. Residues 91–111 (WQGTCYLTPLIGAVLADAYWG) form a helical membrane-spanning segment. Threonine 115 carries the phosphothreonine modification. 10 helical membrane-spanning segments follow: residues 116-136 (IACFSGIYFIGMSALTLSASV), 154-174 (PAQYAMFFGGLYLIALGTGGI), 200-220 (FFNWFYFSINIGALVSSSLLV), 228-248 (WGLGFGIPTVFMGLAIASFFF), 351-371 (FPIWASGIIFSAVYAQMSTMF), 387-407 (LPPAALGTFDTASVIIWVPLY), 431-451 (MGIGLFVSVLCMAAAAIVEII), 472-492 (VLWQIPQYFILGAAEVFYFIG), 511-531 (ALALLTNALGNYLSSLILTLV), and 556-576 (FFWLLAGLSLVNMAVYFFSAA).

This sequence belongs to the major facilitator superfamily. Proton-dependent oligopeptide transporter (POT/PTR) (TC 2.A.17) family. Highly expressed in young leaves, roots and germinating seeds, intermediately in stems, flowers and mature leaves and at low level in siliques.

The protein localises to the vacuole membrane. With respect to regulation, inhibited by leucyl-ethionine. Peptide transporter. Mediates the transport of di- and tripeptides. High affinity, low capacity transporter. Can also transport histidine. The protein is Protein NRT1/ PTR FAMILY 8.3 (NPF8.3) of Arabidopsis thaliana (Mouse-ear cress).